The sequence spans 254 residues: Sugar fermentation stimulation protein homolog (254 aa).

The protein belongs to the SfsA family.

The polypeptide is Sugar fermentation stimulation protein homolog (Parasynechococcus marenigrum (strain WH8102)).